The chain runs to 181 residues: Translation initiation factor IF-3 (181 aa).

It belongs to the IF-3 family. In terms of assembly, monomer.

It is found in the cytoplasm. In terms of biological role, IF-3 binds to the 30S ribosomal subunit and shifts the equilibrium between 70S ribosomes and their 50S and 30S subunits in favor of the free subunits, thus enhancing the availability of 30S subunits on which protein synthesis initiation begins. The polypeptide is Translation initiation factor IF-3 (Mycoplasma mycoides subsp. mycoides SC (strain CCUG 32753 / NCTC 10114 / PG1)).